We begin with the raw amino-acid sequence, 1043 residues long: Constitutive coactivator of PPAR-gamma-like protein 1 homolog (1043 aa).

Disordered stretches follow at residues 353 to 497 and 929 to 1043; these read SMVP…HMQI and YGRG…NKEE. Composition is skewed to polar residues over residues 362-375 and 405-419; these read QMLNIPQGSVQSRP and SPINPAQSGSPNHVD. Composition is skewed to basic and acidic residues over residues 451–471 and 951–964; these read TWDKGKKSEKANKKDSTEQAK and EVAKELKTQSEDSK. The RNA binding stretch occupies residues 801 to 1043; that stretch reads VELATKVEKM…LEGAVANKEE (243 aa). Residues 995–1010 show a composition bias toward low complexity; that stretch reads EARASSNSESALSSDS.

It belongs to the constitutive coactivator of PPAR-gamma family.

The protein localises to the cytoplasm. The protein resides in the cell membrane. Its function is as follows. May bee involved in the oxidative stress-induced survival signaling. Binds RNA. May participate in mRNA transport in the cytoplasm. This Xenopus tropicalis (Western clawed frog) protein is Constitutive coactivator of PPAR-gamma-like protein 1 homolog (fam120a).